The chain runs to 650 residues: SUMO-activating enzyme subunit 2 (650 aa).

Residues 25–30 (GAGGIG), D49, 57–60 (NLNR), K73, 96–97 (SI), and 118–123 (DNRAAR) contribute to the ATP site. Zn(2+) is bound by residues C159 and C162. The Glycyl thioester intermediate role is filled by C174. A Glycyl lysine isopeptide (Lys-Gly) (interchain with G-Cter in SUMO) cross-link involves residue K191. K237 is covalently cross-linked (Glycyl lysine isopeptide (Lys-Gly) (interchain with G-Cter in SUMO1)). Glycyl lysine isopeptide (Lys-Gly) (interchain with G-Cter in SUMO) cross-links involve residues K258, K282, and K286. Residues C446 and C449 each contribute to the Zn(2+) site. Residues 554–650 (DAPDKAPAPS…DDDEDIIALD (97 aa)) form a disordered region. Over residues 572–586 (ANGNKDSAQPSTSSK) the composition is skewed to polar residues. The segment covering 590–603 (EDDDVLLVDSDEEP) has biased composition (acidic residues). Phosphoserine is present on S599. Glycyl lysine isopeptide (Lys-Gly) (interchain with G-Cter in SUMO) cross-links involve residues K618 and K630. Acidic residues predominate over residues 638–650 (PADDDDEDIIALD).

Belongs to the ubiquitin-activating E1 family. As to quaternary structure, heterodimer of sae1 and uba2/sae2. The heterodimer corresponds to the two domains that are encoded on a single polypeptide chain in ubiquitin-activating enzyme E1. Interacts with ube2i. In terms of processing, sumoylated with SUMO1 and SUMO2/3 and by UBC9. Sumoylation at Lys-237 inhibits enzymatic activity. Sumoylation at the C-terminal lysine cluster plays an essential role in nuclear trafficking. Expressed in eye, brain and pectoral fins.

Its subcellular location is the cytoplasm. It is found in the nucleus. Its pathway is protein modification; protein sumoylation. Functionally, the heterodimer acts as an E1 ligase for sumo1, sumo2, and sumo3. It mediates ATP-dependent activation of sumo proteins followed by formation of a thioester bond between a sumo protein and a conserved active site cysteine residue on uba2/sae2. The chain is SUMO-activating enzyme subunit 2 (uba2) from Danio rerio (Zebrafish).